We begin with the raw amino-acid sequence, 393 residues long: S-adenosylmethionine synthase (393 aa).

His16 serves as a coordination point for ATP. Asp18 serves as a coordination point for Mg(2+). Glu44 is a binding site for K(+). L-methionine-binding residues include Glu57 and Gln100. Residues Gln100 to His110 are flexible loop. Residues Asp167 to Lys169, Arg238 to Phe239, Asp247, Arg253 to Lys254, Ala270, and Lys274 contribute to the ATP site. Position 247 (Asp247) interacts with L-methionine. L-methionine is bound at residue Lys278.

It belongs to the AdoMet synthase family. As to quaternary structure, homotetramer; dimer of dimers. Requires Mg(2+) as cofactor. K(+) serves as cofactor.

It is found in the cytoplasm. The catalysed reaction is L-methionine + ATP + H2O = S-adenosyl-L-methionine + phosphate + diphosphate. The protein operates within amino-acid biosynthesis; S-adenosyl-L-methionine biosynthesis; S-adenosyl-L-methionine from L-methionine: step 1/1. Its function is as follows. Catalyzes the formation of S-adenosylmethionine (AdoMet) from methionine and ATP. The overall synthetic reaction is composed of two sequential steps, AdoMet formation and the subsequent tripolyphosphate hydrolysis which occurs prior to release of AdoMet from the enzyme. This Acidovorax sp. (strain JS42) protein is S-adenosylmethionine synthase.